A 79-amino-acid polypeptide reads, in one-letter code: Small ribosomal subunit protein bS18c (79 aa).

This sequence belongs to the bacterial ribosomal protein bS18 family. Part of the 30S ribosomal subunit.

It localises to the plastid. The protein localises to the chloroplast. The sequence is that of Small ribosomal subunit protein bS18c from Physcomitrium patens (Spreading-leaved earth moss).